The primary structure comprises 323 residues: Staphylococcal-like nuclease CAN1 (323 aa).

The N-myristoyl glycine moiety is linked to residue G2. A lipid anchor (S-palmitoyl cysteine) is attached at C11. One can recognise a TNase-like domain in the interval 130 to 306; the sequence is NTLPVDTKSV…RQKRVGLWAS (177 aa). Residue D143 participates in Ca(2+) binding. Residue R213 is part of the active site. D218 contributes to the Ca(2+) binding site. Active-site residues include E221 and R255.

The protein belongs to the thermonuclease family. The cofactor is Ca(2+).

The protein localises to the cell membrane. Its activity is regulated as follows. Inhibited by Zn(2+). Functionally, enzyme that catalyzes the hydrolysis of both DNA and RNA at the 5' position of the phosphodiester bond. Possesses activity toward the single-stranded DNA, double-stranded DNA and RNA. May be involved in genomic DNA degradation during programmed cell death. The sequence is that of Staphylococcal-like nuclease CAN1 (CAN1) from Arabidopsis thaliana (Mouse-ear cress).